A 73-amino-acid chain; its full sequence is MLKKLYSKKGQVSMEMGILVASAVAVAAIASYFYAVNVKYSDTHAGETAKNTSNALINVTENVCGNISEITIP.

The propeptide occupies 1 to 10 (MLKKLYSKKG). Positions 11–19 (QVSMEMGIL) match the QXSXEXXXL motif.

The N-terminus is probably cleaved by the prepilin peptidase EppA, which recognizes the class III signal sequence.

Its subcellular location is the secreted. The protein resides in the cell surface. The protein localises to the fimbrium. The chain is Probable minor pilin MMP0528 from Methanococcus maripaludis (strain DSM 14266 / JCM 13030 / NBRC 101832 / S2 / LL).